We begin with the raw amino-acid sequence, 519 residues long: Maturase K (519 aa).

This sequence belongs to the intron maturase 2 family. MatK subfamily.

The protein resides in the plastid. It is found in the chloroplast. Functionally, usually encoded in the trnK tRNA gene intron. Probably assists in splicing its own and other chloroplast group II introns. The sequence is that of Maturase K from Cycas panzhihuaensis (Dukou cycad).